A 117-amino-acid polypeptide reads, in one-letter code: Large ribosomal subunit protein eL8 (117 aa).

The protein belongs to the eukaryotic ribosomal protein eL8 family. As to quaternary structure, part of the 50S ribosomal subunit. Part of the RNase P complex.

It localises to the cytoplasm. It catalyses the reaction Endonucleolytic cleavage of RNA, removing 5'-extranucleotides from tRNA precursor.. In terms of biological role, multifunctional RNA-binding protein that recognizes the K-turn motif in ribosomal RNA, the RNA component of RNase P, box H/ACA, box C/D and box C'/D' sRNAs. Part of ribonuclease P, a protein complex that generates mature tRNA molecules by cleaving their 5'-ends, this subunit dramatically stimulates RNase P activity. The chain is Large ribosomal subunit protein eL8 from Methanococcus maripaludis (strain DSM 14266 / JCM 13030 / NBRC 101832 / S2 / LL).